The sequence spans 627 residues: MRLSWVIGGAQGTGIDTAANIFGNAVASAGYYIYGNREYYSNIKGRHSYFSLTISDKRVRSNTQKIDILVSFDAETVFQHFYDVKDILIYNKAVETTKIDAVQSMEPELAERIKDFLTKQGYETTVKGALEYASKNNVTLIPVNYDEIAKKVADEMKVPLSVTERVKNIVGITISYKLLGLDVNYLIEAINSTFKQDLYRKMNELAVKDSYDIVESRYNLKPSSKERRRFWLDGNTAVAIGKIYGGVRFQSYYPITPASDESVYIEAHQDVLMEDPITGDKKKGTIVVVQAEDELAAINMAIGAALTGVRAATATSGPGFSLMVEGLGWAGMNEVPVVITYYIRGGPSTGLPTRTAQSDLIFPIFAGHGEFPKIVLASGDHAEAFKDAIWALNLAEKYQTPVIHLVEKTLANSYSTIPYEELELDKLKAERGKIVESGDISYKRFKFTEDGISPRAFLGKATMYYTGDEHNEEGHISEDVVNRTMMYEKRMKKLEVADKEIPEESRVKIYGDLNSRNLIITWGSPTGVLRDILEESNFDFTLLQIRMFSPFPKNLVSKLMEGRDKIITVEGNYLAQTSLLVKMYTGKDVTNSILKWNGRPFLRDELEEALIKVIKDGEKRVVLNGGI.

The YPITP motif motif lies at 253 to 257 (YPITP). 2 residues coordinate substrate: threonine 256 and arginine 344.

In terms of assembly, heterodimer composed of an alpha and a beta subunit.

The enzyme catalyses a 2-oxocarboxylate + 2 oxidized [2Fe-2S]-[ferredoxin] + CoA = an acyl-CoA + 2 reduced [2Fe-2S]-[ferredoxin] + CO2 + H(+). Inhibited by low concentration of 4-fluoro-7-nitrobenzofurazan (NBD-F). Functionally, catalyzes the coenzyme A-dependent oxidative decarboxylation of different 2-oxoacids such as 2-oxoglutarate, pyruvate and 2-oxobutyrate to form their CoA derivatives. The chain is 2-oxoacid:ferredoxin oxidoreductase 1, subunit alpha from Sulfurisphaera tokodaii (strain DSM 16993 / JCM 10545 / NBRC 100140 / 7) (Sulfolobus tokodaii).